A 237-amino-acid polypeptide reads, in one-letter code: Sugar fermentation stimulation protein homolog (237 aa).

This sequence belongs to the SfsA family.

The protein is Sugar fermentation stimulation protein homolog of Pseudomonas syringae pv. tomato (strain ATCC BAA-871 / DC3000).